The following is a 457-amino-acid chain: Multidrug resistance protein MdtK (457 aa).

A run of 12 helical transmembrane segments spans residues 11–31, 53–73, 93–113, 127–147, 160–180, 188–208, 243–263, 280–300, 316–336, 357–377, 387–407, and 418–438; these read LLAL…MGVV, IWLP…PIIA, WLAI…KFLI, AVGF…YQVL, GMVI…IFIY, LGGV…FLLM, LPIA…ALLI, FSSL…IRVG, YTGI…SIIL, LMLF…GAGV, IFYI…YILG, and PQGF…MIFA.

The protein belongs to the multi antimicrobial extrusion (MATE) (TC 2.A.66.1) family. MdtK subfamily.

The protein localises to the cell inner membrane. Multidrug efflux pump that functions probably as a Na(+)/drug antiporter. The chain is Multidrug resistance protein MdtK from Photorhabdus laumondii subsp. laumondii (strain DSM 15139 / CIP 105565 / TT01) (Photorhabdus luminescens subsp. laumondii).